Reading from the N-terminus, the 609-residue chain is Actin-interacting protein 1-2 (609 aa).

WD repeat units follow at residues 2–42 (ELSE…VTLD), 54–93 (EHAY…VLKN), 97–141 (VLAG…GEFD), 142–182 (GHSR…FKLS), 185–224 (EHSN…ILGE), 230–269 (GHKG…SGSL), 277–318 (GSSG…KSPF), 322–362 (GHMK…CGKL), 445–484 (NLGF…LTEE), 489–528 (RHRG…MKLK), 532–571 (YHSA…SSRM), and 576–609 (AHLG…FTPQ).

As to expression, expressed in leaves, stems, flower buds and flowers.

In terms of biological role, binds actin. Enhances the F-actin depolymerization activity of actin-depolymerizing factor (ADF) proteins. This Arabidopsis thaliana (Mouse-ear cress) protein is Actin-interacting protein 1-2.